A 361-amino-acid polypeptide reads, in one-letter code: Beta-hexosaminidase (361 aa).

Substrate-binding positions include aspartate 69, arginine 77, arginine 144, and 174-175 (KH). Histidine 187 acts as the Proton donor/acceptor in catalysis. Catalysis depends on aspartate 258, which acts as the Nucleophile.

The protein belongs to the glycosyl hydrolase 3 family. NagZ subfamily.

The protein localises to the cytoplasm. The enzyme catalyses Hydrolysis of terminal non-reducing N-acetyl-D-hexosamine residues in N-acetyl-beta-D-hexosaminides.. It participates in cell wall biogenesis; peptidoglycan recycling. Plays a role in peptidoglycan recycling by cleaving the terminal beta-1,4-linked N-acetylglucosamine (GlcNAc) from peptide-linked peptidoglycan fragments, giving rise to free GlcNAc, anhydro-N-acetylmuramic acid and anhydro-N-acetylmuramic acid-linked peptides. This is Beta-hexosaminidase from Neisseria meningitidis serogroup C / serotype 2a (strain ATCC 700532 / DSM 15464 / FAM18).